The primary structure comprises 691 residues: Serotransferrin-2 (691 aa).

Residues 1 to 18 (MKLLLLSALLGCLATAYA) form the signal peptide. Transferrin-like domains are found at residues 25-329 (VKWC…SLKK) and 340-670 (IKWC…SLRK). An intrachain disulfide couples Cys-28 to Cys-50. Fe(3+)-binding residues include Asp-74 and Tyr-104. Intrachain disulfides connect Cys-127–Cys-207, Cys-172–Cys-186, and Cys-235–Cys-249. Positions 129, 134, 136, and 137 each coordinate hydrogencarbonate. A glycan (N-linked (GlcNAc...) asparagine) is linked at Asn-169. Tyr-201 provides a ligand contact to Fe(3+). His-257 contributes to the Fe(3+) binding site. Intrachain disulfides connect Cys-343/Cys-379 and Cys-353/Cys-370. Positions 394 and 428 each coordinate Fe(3+). 7 cysteine pairs are disulfide-bonded: Cys-404-Cys-682, Cys-419-Cys-643, Cys-451-Cys-530, Cys-475-Cys-671, Cys-485-Cys-499, Cys-496-Cys-513, and Cys-570-Cys-584. Hydrogencarbonate contacts are provided by Thr-453, Arg-457, Ala-459, and Gly-460. Tyr-524 contributes to the Fe(3+) binding site. Residue His-592 participates in Fe(3+) binding.

Belongs to the transferrin family. As to quaternary structure, monomer. Abundant in liver and serum with smaller amounts found in the stomach and kidney.

Its subcellular location is the secreted. Its function is as follows. Transferrins are iron binding transport proteins which can bind two Fe(3+) ions in association with the binding of an anion, usually bicarbonate. It is responsible for the transport of iron from sites of absorption and heme degradation to those of storage and utilization. Serum transferrin may also have a further role in stimulating cell proliferation. In Salmo salar (Atlantic salmon), this protein is Serotransferrin-2 (tf2).